We begin with the raw amino-acid sequence, 659 residues long: Exoribonuclease 2 (659 aa).

Residues 189–532 (RRDLTALHFV…NHRLIKACLA (344 aa)) enclose the RNB domain. Positions 577–659 (NPEFRAEVQD…ETRSLIGNLV (83 aa)) constitute an S1 motif domain.

It belongs to the RNR ribonuclease family. RNase II subfamily.

It is found in the cytoplasm. The enzyme catalyses Exonucleolytic cleavage in the 3'- to 5'-direction to yield nucleoside 5'-phosphates.. Involved in mRNA degradation. Hydrolyzes single-stranded polyribonucleotides processively in the 3' to 5' direction. The protein is Exoribonuclease 2 of Mannheimia succiniciproducens (strain KCTC 0769BP / MBEL55E).